The sequence spans 132 residues: Small ribosomal subunit protein uS8 (132 aa).

It belongs to the universal ribosomal protein uS8 family. As to quaternary structure, part of the 30S ribosomal subunit. Contacts proteins S5 and S12.

Its function is as follows. One of the primary rRNA binding proteins, it binds directly to 16S rRNA central domain where it helps coordinate assembly of the platform of the 30S subunit. The protein is Small ribosomal subunit protein uS8 of Geobacillus kaustophilus (strain HTA426).